The primary structure comprises 157 residues: MGVIEFLLALAQDMILAAIPAVGFAMVFNVPVRALRWCALLGAIGHGSRMILMTSGLNIEWSTFMASMLVGTIGIQWSRWYLAHPKVFTVAAVIPMFPGISAYTAMISAVKISQLGYSEPLMITLLTNFLTASSIVGALSIGLSIPGLWLYRKRPRV.

4 helical membrane passes run 8–28 (LALAQDMILAAIPAVGFAMVF), 50–70 (MILMTSGLNIEWSTFMASMLV), 87–107 (VFTVAAVIPMFPGISAYTAMI), and 129–149 (FLTASSIVGALSIGLSIPGLW).

It belongs to the ThrE exporter (TC 2.A.79) family. The transporter is composed of YjjB and YjjP.

It localises to the cell inner membrane. In terms of biological role, involved in succinate export with YjjP. Both proteins are required for export. The chain is Probable succinate transporter subunit YjjB from Escherichia coli O1:K1 / APEC.